The primary structure comprises 226 residues: Cytidylate kinase (226 aa).

10 to 18 is a binding site for ATP; the sequence is GPASSGKST.

It belongs to the cytidylate kinase family. Type 1 subfamily.

The protein resides in the cytoplasm. The catalysed reaction is CMP + ATP = CDP + ADP. It catalyses the reaction dCMP + ATP = dCDP + ADP. This is Cytidylate kinase from Streptococcus equi subsp. zooepidemicus (strain MGCS10565).